The chain runs to 229 residues: MGKKYKESTKLIDRKTLYTPLEAMELALKTAKANFDETIELSIKLGVDPRHADQQVRGAVVLPHGTGKKVRVLVLAKGDRIKEAEDAGADYVGAEEYVEKIQKENWFDFDVVVATPDMMGVVGRLGRILGPKGLMPNPKSGTVTFDVAKAIQEIKAGKVEYRVDKTSIVHVPIGKKSFEVQKLLDNFRVLMEAIIKAKPSAAKGQYLKSVAVSSTMGPGIKINSVKVLE.

Belongs to the universal ribosomal protein uL1 family. As to quaternary structure, part of the 50S ribosomal subunit.

Its function is as follows. Binds directly to 23S rRNA. The L1 stalk is quite mobile in the ribosome, and is involved in E site tRNA release. Functionally, protein L1 is also a translational repressor protein, it controls the translation of the L11 operon by binding to its mRNA. The chain is Large ribosomal subunit protein uL1 from Clostridium kluyveri (strain ATCC 8527 / DSM 555 / NBRC 12016 / NCIMB 10680 / K1).